A 312-amino-acid polypeptide reads, in one-letter code: tRNA dimethylallyltransferase (312 aa).

ATP is bound at residue 19–26 (GPSGSGKS). Residue 21–26 (SGSGKS) coordinates substrate. The interval 44 to 47 (DSLS) is interaction with substrate tRNA.

Belongs to the IPP transferase family. As to quaternary structure, monomer. Requires Mg(2+) as cofactor.

It catalyses the reaction adenosine(37) in tRNA + dimethylallyl diphosphate = N(6)-dimethylallyladenosine(37) in tRNA + diphosphate. Its function is as follows. Catalyzes the transfer of a dimethylallyl group onto the adenine at position 37 in tRNAs that read codons beginning with uridine, leading to the formation of N6-(dimethylallyl)adenosine (i(6)A). The chain is tRNA dimethylallyltransferase from Helicobacter pylori (strain J99 / ATCC 700824) (Campylobacter pylori J99).